A 238-amino-acid polypeptide reads, in one-letter code: Nuclear transcription factor Y subunit B-9 (238 aa).

The DNA-binding element occupies methionine 64–isoleucine 70. Residues isoleucine 91 to valine 102 are subunit association domain (SAD). A disordered region spans residues arginine 203–lysine 238. A compositionally biased stretch (low complexity) spans glycine 208 to glycine 227.

It belongs to the NFYB/HAP3 subunit family. As to quaternary structure, heterotrimeric transcription factor composed of three components, NF-YA, NF-YB and NF-YC. NF-YB and NF-YC must interact and dimerize for NF-YA association and DNA binding. Interacts with PRN1. In terms of tissue distribution, expressed in green siliques. Present in etiolated seedlings.

It localises to the nucleus. Component of the NF-Y/HAP transcription factor complex. The NF-Y complex stimulates the transcription of various genes by recognizing and binding to a CCAAT motif in promoters. Acts as a central regulator of the embryogenesis. Required for the speciation of cotyledon identity and the completion of embryo maturation. Controls seed storage protein genes through the regulation of FUS3 and ABI3. Involved in the blue light (BL) and abscisic acid (ABA) signaling pathways. The protein is Nuclear transcription factor Y subunit B-9 (NFYB9) of Arabidopsis thaliana (Mouse-ear cress).